We begin with the raw amino-acid sequence, 120 residues long: Large ribosomal subunit protein uL18 (120 aa).

Belongs to the universal ribosomal protein uL18 family. Part of the 50S ribosomal subunit; part of the 5S rRNA/L5/L18/L25 subcomplex. Contacts the 5S and 23S rRNAs.

Functionally, this is one of the proteins that bind and probably mediate the attachment of the 5S RNA into the large ribosomal subunit, where it forms part of the central protuberance. In Acidiphilium cryptum (strain JF-5), this protein is Large ribosomal subunit protein uL18.